We begin with the raw amino-acid sequence, 345 residues long: Dihydroorotate dehydrogenase (quinone) (345 aa).

FMN-binding positions include 65 to 69 (AGLDK) and threonine 89. Lysine 69 provides a ligand contact to substrate. Substrate is bound at residue 114 to 118 (NRMGF). FMN is bound by residues asparagine 142 and asparagine 175. Asparagine 175 is a binding site for substrate. Serine 178 acts as the Nucleophile in catalysis. Substrate is bound at residue asparagine 180. FMN is bound by residues lysine 220 and threonine 248. Substrate is bound at residue 249-250 (NT). FMN is bound by residues glycine 271, glycine 300, and 321–322 (YT).

Belongs to the dihydroorotate dehydrogenase family. Type 2 subfamily. As to quaternary structure, monomer. FMN serves as cofactor.

Its subcellular location is the cell membrane. The enzyme catalyses (S)-dihydroorotate + a quinone = orotate + a quinol. Its pathway is pyrimidine metabolism; UMP biosynthesis via de novo pathway; orotate from (S)-dihydroorotate (quinone route): step 1/1. In terms of biological role, catalyzes the conversion of dihydroorotate to orotate with quinone as electron acceptor. In Burkholderia mallei (strain NCTC 10247), this protein is Dihydroorotate dehydrogenase (quinone).